Here is a 150-residue protein sequence, read N- to C-terminus: Prolamin PPROL 14E (150 aa).

The first 19 residues, 1–19 (MKIIFVFALLAIAACSASA), serve as a signal peptide directing secretion. Gln20 bears the Pyrrolidone carboxylic acid mark.

This sequence belongs to the prolamin family.

Its subcellular location is the vacuole. It localises to the aleurone grain. Its function is as follows. Seed storage protein; serves as a source of nitrogen, carbon and sulfur for the young developing seedling. This chain is Prolamin PPROL 14E, found in Oryza sativa subsp. indica (Rice).